A 277-amino-acid polypeptide reads, in one-letter code: MDPILALKAIIMGIVEGFTEFLPISSTGHLILAGSLLDFTGPKVKVFEIAIQTGAMLAVVWEYRAKIAAVLGGLLTERKAQKFALNIIIAFLPAALLGLVFASKIKEKLFAPVPVAIAFIVGGFIILWIEKRNRNTDFVARVETVDDMTMLDALKVGCAQAFALIPGTSRSGASIIGGMFFGLSRKAATEFSFFLAIPTLMGATVYSVYKDRALLSMADIPLFGLGGFAAFVSAFLCVRWLLRYISTHDFTFFAYYRIVFGLFVLLSAYYGWVVWAD.

A run of 5 helical transmembrane segments spans residues 83–103 (FALN…VFAS), 109–129 (LFAP…ILWI), 188–208 (ATEF…VYSV), 218–238 (ADIP…FLCV), and 256–276 (YRIV…VVWA).

Belongs to the UppP family.

The protein resides in the cell inner membrane. The catalysed reaction is di-trans,octa-cis-undecaprenyl diphosphate + H2O = di-trans,octa-cis-undecaprenyl phosphate + phosphate + H(+). In terms of biological role, catalyzes the dephosphorylation of undecaprenyl diphosphate (UPP). Confers resistance to bacitracin. The chain is Undecaprenyl-diphosphatase from Janthinobacterium sp. (strain Marseille) (Minibacterium massiliensis).